The sequence spans 458 residues: UPF0210 protein MMP1427 (458 aa).

The protein belongs to the UPF0210 family.

The sequence is that of UPF0210 protein MMP1427 from Methanococcus maripaludis (strain DSM 14266 / JCM 13030 / NBRC 101832 / S2 / LL).